We begin with the raw amino-acid sequence, 430 residues long: 3-phosphoshikimate 1-carboxyvinyltransferase (430 aa).

3-phosphoshikimate is bound by residues lysine 20, serine 21, and arginine 25. Lysine 20 is a phosphoenolpyruvate binding site. Residues glycine 92 and arginine 120 each coordinate phosphoenolpyruvate. Positions 166, 168, 312, and 339 each coordinate 3-phosphoshikimate. Glutamine 168 contacts phosphoenolpyruvate. Residue aspartate 312 is the Proton acceptor of the active site. Arginine 343 and arginine 387 together coordinate phosphoenolpyruvate.

Belongs to the EPSP synthase family. In terms of assembly, monomer.

It is found in the cytoplasm. It catalyses the reaction 3-phosphoshikimate + phosphoenolpyruvate = 5-O-(1-carboxyvinyl)-3-phosphoshikimate + phosphate. Its pathway is metabolic intermediate biosynthesis; chorismate biosynthesis; chorismate from D-erythrose 4-phosphate and phosphoenolpyruvate: step 6/7. Functionally, catalyzes the transfer of the enolpyruvyl moiety of phosphoenolpyruvate (PEP) to the 5-hydroxyl of shikimate-3-phosphate (S3P) to produce enolpyruvyl shikimate-3-phosphate and inorganic phosphate. The chain is 3-phosphoshikimate 1-carboxyvinyltransferase from Lactococcus lactis subsp. lactis (strain IL1403) (Streptococcus lactis).